We begin with the raw amino-acid sequence, 444 residues long: Serine--tRNA ligase (444 aa).

Position 248-250 (Thr-248–Glu-250) interacts with L-serine. Arg-279–Glu-281 lines the ATP pocket. Glu-302 lines the L-serine pocket. Glu-366–Ser-369 contacts ATP. Residue Ser-401 coordinates L-serine.

It belongs to the class-II aminoacyl-tRNA synthetase family. Type-1 seryl-tRNA synthetase subfamily. As to quaternary structure, homodimer. The tRNA molecule binds across the dimer.

Its subcellular location is the cytoplasm. It catalyses the reaction tRNA(Ser) + L-serine + ATP = L-seryl-tRNA(Ser) + AMP + diphosphate + H(+). It carries out the reaction tRNA(Sec) + L-serine + ATP = L-seryl-tRNA(Sec) + AMP + diphosphate + H(+). Its pathway is aminoacyl-tRNA biosynthesis; selenocysteinyl-tRNA(Sec) biosynthesis; L-seryl-tRNA(Sec) from L-serine and tRNA(Sec): step 1/1. In terms of biological role, catalyzes the attachment of serine to tRNA(Ser). Is also able to aminoacylate tRNA(Sec) with serine, to form the misacylated tRNA L-seryl-tRNA(Sec), which will be further converted into selenocysteinyl-tRNA(Sec). This chain is Serine--tRNA ligase, found in Polaromonas naphthalenivorans (strain CJ2).